A 373-amino-acid polypeptide reads, in one-letter code: Chaperone protein DnaJ (373 aa).

One can recognise a J domain in the interval 4-68 (NYYQILGVSK…QKRAAYDRLG (65 aa)). A CR-type zinc finger spans residues 136-214 (GIEKNINFSS…CHGMGRYHKQ (79 aa)). C149, C152, C166, C169, C188, C191, C202, and C205 together coordinate Zn(2+). CXXCXGXG motif repeat units lie at residues 149–156 (CDTCHGSG), 166–173 (CDACSGVG), 188–195 (CHKCQGNG), and 202–209 (CKKCHGMG).

It belongs to the DnaJ family. In terms of assembly, homodimer. Zn(2+) serves as cofactor.

The protein resides in the cytoplasm. In terms of biological role, participates actively in the response to hyperosmotic and heat shock by preventing the aggregation of stress-denatured proteins and by disaggregating proteins, also in an autonomous, DnaK-independent fashion. Unfolded proteins bind initially to DnaJ; upon interaction with the DnaJ-bound protein, DnaK hydrolyzes its bound ATP, resulting in the formation of a stable complex. GrpE releases ADP from DnaK; ATP binding to DnaK triggers the release of the substrate protein, thus completing the reaction cycle. Several rounds of ATP-dependent interactions between DnaJ, DnaK and GrpE are required for fully efficient folding. Also involved, together with DnaK and GrpE, in the DNA replication of plasmids through activation of initiation proteins. This is Chaperone protein DnaJ from Rickettsia rickettsii (strain Iowa).